Here is a 116-residue protein sequence, read N- to C-terminus: Large ribosomal subunit protein bL17 (116 aa).

It belongs to the bacterial ribosomal protein bL17 family. As to quaternary structure, part of the 50S ribosomal subunit. Contacts protein L32.

This is Large ribosomal subunit protein bL17 from Synechococcus sp. (strain RCC307).